Here is a 398-residue protein sequence, read N- to C-terminus: Phosphoglycerate kinase (398 aa).

Residues 21-23 (DFN), R36, 59-62 (HFGR), R117, and R150 contribute to the substrate site. ATP is bound by residues K200, E321, and 351 to 354 (GGDS).

The protein belongs to the phosphoglycerate kinase family. As to quaternary structure, monomer.

The protein localises to the cytoplasm. It carries out the reaction (2R)-3-phosphoglycerate + ATP = (2R)-3-phospho-glyceroyl phosphate + ADP. It participates in carbohydrate degradation; glycolysis; pyruvate from D-glyceraldehyde 3-phosphate: step 2/5. The sequence is that of Phosphoglycerate kinase from Wolbachia pipientis wMel.